The sequence spans 499 residues: Probable cytosol aminopeptidase (499 aa).

Mn(2+) is bound by residues Lys-263 and Asp-268. Lys-275 is a catalytic residue. Mn(2+) contacts are provided by Asp-286, Asp-345, and Glu-347. Residue Arg-349 is part of the active site.

The protein belongs to the peptidase M17 family. Mn(2+) serves as cofactor.

Its subcellular location is the cytoplasm. The catalysed reaction is Release of an N-terminal amino acid, Xaa-|-Yaa-, in which Xaa is preferably Leu, but may be other amino acids including Pro although not Arg or Lys, and Yaa may be Pro. Amino acid amides and methyl esters are also readily hydrolyzed, but rates on arylamides are exceedingly low.. It carries out the reaction Release of an N-terminal amino acid, preferentially leucine, but not glutamic or aspartic acids.. Functionally, presumably involved in the processing and regular turnover of intracellular proteins. Catalyzes the removal of unsubstituted N-terminal amino acids from various peptides. The polypeptide is Probable cytosol aminopeptidase (Bradyrhizobium sp. (strain BTAi1 / ATCC BAA-1182)).